Reading from the N-terminus, the 1202-residue chain is Stress response protein NST1 (1202 aa).

Disordered regions lie at residues 28–217, 236–291, 390–423, 487–543, 579–852, 904–967, and 979–1015; these read RHLN…EDDA, GHYQ…SGSK, RSAPHPRPLMTTHPPPGPYDDEEEDEYSGEDDEE, AHPS…RMEE, ELEE…SMLP, PNQA…DSDV, and LLDEEDVPEIPDRRSSVQQHGSMRSMPIGFGFPDAPN. Over residues 158–167 the composition is skewed to basic and acidic residues; that stretch reads REKEAAKKAA. Over residues 178–187 the composition is skewed to polar residues; that stretch reads NGVSSGSTHL. The segment covering 204-217 has biased composition (acidic residues); that stretch reads PELDDPQYDDEDDA. The span at 252 to 261 shows a compositional bias: basic residues; sequence KKPRKKKKGA. Composition is skewed to acidic residues over residues 408–423 and 504–536; these read YDDEEEDEYSGEDDEE and PEEEEYDDEVDEEEGFEDEDYEEDDEDEDEAMT. Residues 557 to 704 adopt a coiled-coil conformation; sequence EQRVLQAYRE…EKKVKDDAKR (148 aa). The segment covering 579–710 has biased composition (basic and acidic residues); that stretch reads ELEEENEKKD…DAKRKERDRA (132 aa). Residues 754 to 789 show a composition bias toward polar residues; the sequence is RPRQTSRQGSHGSSPKTPQVAPGTSKSMSPTSQAQG. The span at 816-828 shows a compositional bias: pro residues; the sequence is SPMPPIGPPPGLS. The span at 830–848 shows a compositional bias: low complexity; that stretch reads PPGLSMGLPPGLNGFPGPG. The span at 916–926 shows a compositional bias: polar residues; the sequence is TQHSRQGSGSF. Residues 954 to 967 are compositionally biased toward basic and acidic residues; it reads KPHDSNKHGQDSDV.

This sequence belongs to the NST1 family.

The protein resides in the cytoplasm. Functionally, may act as a negative regulator of salt tolerance. The chain is Stress response protein NST1 (NST1) from Phaeosphaeria nodorum (strain SN15 / ATCC MYA-4574 / FGSC 10173) (Glume blotch fungus).